The primary structure comprises 602 residues: Elongation factor 4 (602 aa).

Residues 7-189 (RKIRNFSIIA…AIVKNIPPPT (183 aa)) form the tr-type G domain. GTP is bound by residues 19–24 (DHGKST) and 136–139 (NKID).

The protein belongs to the TRAFAC class translation factor GTPase superfamily. Classic translation factor GTPase family. LepA subfamily.

The protein localises to the cell membrane. The enzyme catalyses GTP + H2O = GDP + phosphate + H(+). In terms of biological role, required for accurate and efficient protein synthesis under certain stress conditions. May act as a fidelity factor of the translation reaction, by catalyzing a one-codon backward translocation of tRNAs on improperly translocated ribosomes. Back-translocation proceeds from a post-translocation (POST) complex to a pre-translocation (PRE) complex, thus giving elongation factor G a second chance to translocate the tRNAs correctly. Binds to ribosomes in a GTP-dependent manner. This is Elongation factor 4 from Alkaliphilus metalliredigens (strain QYMF).